Consider the following 535-residue polypeptide: UDP-glucuronosyltransferase 1A1 (535 aa).

A signal peptide spans 1 to 29; sequence MSVVCRSSCSLLLLPCLLLCVLGPSASHA. Asparagine 89, asparagine 297, and asparagine 435 each carry an N-linked (GlcNAc...) asparagine glycan. Residues 493-509 form a helical membrane-spanning segment; sequence VIGFLLAIVLTVVFIVY.

This sequence belongs to the UDP-glycosyltransferase family. Homodimers. Homooligomer. Interacts with UGT1A3, UGT1A4, UGT1A6, UGT1A7, UGT1A8, UGT1A9 and UGT1A10 to form heterodimers.

The protein resides in the endoplasmic reticulum membrane. It carries out the reaction glucuronate acceptor + UDP-alpha-D-glucuronate = acceptor beta-D-glucuronoside + UDP + H(+). The enzyme catalyses 17beta-estradiol + UDP-alpha-D-glucuronate = 17beta-estradiol 3-O-(beta-D-glucuronate) + UDP + H(+). The catalysed reaction is 2-hydroxyestrone + UDP-alpha-D-glucuronate = 2-hydroxyestrone 3-O-(beta-D-glucuronate) + UDP + H(+). It catalyses the reaction 2-hydroxy-17beta-estradiol + UDP-alpha-D-glucuronate = 2-hydroxy-17beta-estradiol 3-O-(beta-D-glucuronate) + UDP + H(+). It carries out the reaction 2-methoxy-17beta-estradiol + UDP-alpha-D-glucuronate = 2-methoxy-17beta-estradiol 3-O-(beta-D-glucuronate) + UDP + H(+). The enzyme catalyses 17alpha-estradiol + UDP-alpha-D-glucuronate = 17alpha-estradiol 3-O-(beta-D-glucuronate) + UDP + H(+). The catalysed reaction is 16beta,17beta-estriol + UDP-alpha-D-glucuronate = 16beta,17beta-estriol 16-O-(beta-D-glucuronate) + UDP + H(+). It catalyses the reaction losartan + UDP-alpha-D-glucuronate = losartan-2-N-beta-D-glucuronide + UDP. It carries out the reaction prunetin + UDP-alpha-D-glucuronate = prunetin-4'-O-beta-D-glucuronide + UDP. The enzyme catalyses SN-38 + UDP-alpha-D-glucuronate = SN-38 O-beta-D-glucuronide + UDP + H(+). The catalysed reaction is (4Z,15Z)-bilirubin IXalpha + UDP-alpha-D-glucuronate = (4Z,15Z)-bilirubin IXalpha C12-beta-D-glucuronoside + UDP. It catalyses the reaction (4Z,15Z)-bilirubin IXalpha + UDP-alpha-D-glucuronate = (4Z,15Z)-bilirubin IXalpha C8-beta-D-glucuronoside + UDP. It carries out the reaction (4Z,15Z)-bilirubin IXalpha C8-beta-D-glucuronoside + UDP-alpha-D-glucuronate = (4Z,15Z)-bilirubin IXalpha C8,C12-beta-D-bisglucuronoside + UDP. The enzyme catalyses (4Z,15Z)-bilirubin IXalpha C12-beta-D-glucuronoside + UDP-alpha-D-glucuronate = (4Z,15Z)-bilirubin IXalpha C8,C12-beta-D-bisglucuronoside + UDP. The catalysed reaction is 8-iso-prostaglandin F2alpha + UDP-alpha-D-glucuronate = 8-iso-prostaglandin F2alpha-glucuronide + UDP + H(+). It catalyses the reaction (5Z,8Z,11Z,14Z)-eicosatetraenoate + UDP-alpha-D-glucuronate = O-[(5Z),(8Z),(11Z),(14Z)-eicosatetraenoyl]-beta-D-glucuronate + UDP. It carries out the reaction 15-hydroxy-(5Z,8Z,11Z,13E)-eicosatetraenoate + UDP-alpha-D-glucuronate = 15-O-(beta-D-glucuronosyl)-(5Z,8Z,11Z,14Z)-eicosatetraenoate + UDP + H(+). The enzyme catalyses 20-hydroxy-(5Z,8Z,11Z,14Z)-eicosatetraenoate + UDP-alpha-D-glucuronate = 20-O-(beta-D-glucuronosyl)-(5Z,8Z,11Z,14Z)-eicosatetraenoate + UDP + H(+). The catalysed reaction is prostaglandin B1 + UDP-alpha-D-glucuronate = 15-O-(beta-D-glucuronosyl)-prostaglandin B1 + UDP + H(+). It catalyses the reaction (E)-ferulate + UDP-alpha-D-glucuronate = (E)-4-O-(beta-D-glucuronosyl)-ferulate + UDP + H(+). It carries out the reaction (E)-ferulate + UDP-alpha-D-glucuronate = (E)-ferulic acid beta-D-glucuronate ester + UDP. In terms of biological role, UDP-glucuronosyltransferase (UGT) that catalyzes phase II biotransformation reactions in which lipophilic substrates are conjugated with glucuronic acid to increase the metabolite's water solubility, thereby facilitating excretion into either the urine or bile. Essential for the elimination and detoxification of drugs, xenobiotics and endogenous compounds. Catalyzes the glucuronidation of endogenous estrogen hormones such as estradiol, estrone and estriol. Involved in the glucuronidation of bilirubin, a degradation product occurring in the normal catabolic pathway that breaks down heme in vertebrates. Involved in the glucuronidation of arachidonic acid (AA) and AA-derived eicosanoids including 15-HETE, 20-HETE, PGB1 and F2-isoprostane (8-iso-PGF2alpha). Involved in the glucuronidation of the phytochemical ferulic acid at the phenolic or the carboxylic acid group. Also catalyzes the glucuronidation the isoflavones genistein, daidzein, glycitein, formononetin, biochanin A and prunetin, which are phytoestrogens with anticancer and cardiovascular properties. Involved in the glucuronidation of the AGTR1 angiotensin receptor antagonist losartan, a drug which can inhibit the effect of angiotensin II. Involved in the biotransformation of 7-ethyl-10-hydroxycamptothecin (SN-38), the pharmacologically active metabolite of the anticancer drug irinotecan. This Rattus norvegicus (Rat) protein is UDP-glucuronosyltransferase 1A1.